The following is a 400-amino-acid chain: CinA-like protein (400 aa).

The protein belongs to the CinA family.

This is CinA-like protein from Escherichia coli O9:H4 (strain HS).